The sequence spans 129 residues: uncharacterized protein (129 aa).

An Isoglutamyl lysine isopeptide (Lys-Gln) (interchain with Q-Cter in protein Pup) cross-link involves residue K121.

This is an uncharacterized protein from Mycolicibacterium smegmatis (strain ATCC 700084 / mc(2)155) (Mycobacterium smegmatis).